Here is a 458-residue protein sequence, read N- to C-terminus: ATP synthase subunit beta (458 aa).

148-155 (GGAGVGKT) serves as a coordination point for ATP.

It belongs to the ATPase alpha/beta chains family. As to quaternary structure, F-type ATPases have 2 components, CF(1) - the catalytic core - and CF(0) - the membrane proton channel. CF(1) has five subunits: alpha(3), beta(3), gamma(1), delta(1), epsilon(1). CF(0) has three main subunits: a(1), b(2) and c(9-12). The alpha and beta chains form an alternating ring which encloses part of the gamma chain. CF(1) is attached to CF(0) by a central stalk formed by the gamma and epsilon chains, while a peripheral stalk is formed by the delta and b chains.

Its subcellular location is the cell inner membrane. It carries out the reaction ATP + H2O + 4 H(+)(in) = ADP + phosphate + 5 H(+)(out). In terms of biological role, produces ATP from ADP in the presence of a proton gradient across the membrane. The catalytic sites are hosted primarily by the beta subunits. The sequence is that of ATP synthase subunit beta from Pseudomonas entomophila (strain L48).